The sequence spans 951 residues: AP-1 complex subunit beta-1 (951 aa).

K318 carries the N6-acetyllysine modification. Position 574 is a 3'-nitrotyrosine (Y574).

This sequence belongs to the adaptor complexes large subunit family. In terms of assembly, adaptor protein complex 1 (AP-1) is a heterotetramer composed of two large adaptins (gamma-type subunit AP1G1 and beta-type subunit AP1B1), a medium adaptin (mu-type subunit AP1M1 or AP1M2) and a small adaptin (sigma-type subunit AP1S1 or AP1S2 or AP1S3).

Its subcellular location is the cytoplasmic vesicle. It is found in the clathrin-coated vesicle membrane. The protein resides in the golgi apparatus. Its function is as follows. Subunit of clathrin-associated adaptor protein complex 1 that plays a role in protein sorting in the late-Golgi/trans-Golgi network (TGN) and/or endosomes. The AP complexes mediate both the recruitment of clathrin to membranes and the recognition of sorting signals within the cytosolic tails of transmembrane cargo molecules. The sequence is that of AP-1 complex subunit beta-1 (AP2B1) from Bos taurus (Bovine).